Reading from the N-terminus, the 168-residue chain is HTH-type transcriptional regulator IscR (168 aa).

The HTH rrf2-type domain maps to 2–131 (KLTSKGRYAV…NNITLGELMT (130 aa)). Residues 28–51 (LADISERQGISLSYLEQLFSKLRK) constitute a DNA-binding region (H-T-H motif). [2Fe-2S] cluster-binding residues include cysteine 92, cysteine 98, and cysteine 104.

It depends on [2Fe-2S] cluster as a cofactor.

Its function is as follows. Regulates the transcription of several operons and genes involved in the biogenesis of Fe-S clusters and Fe-S-containing proteins. The sequence is that of HTH-type transcriptional regulator IscR from Vibrio parahaemolyticus serotype O3:K6 (strain RIMD 2210633).